A 172-amino-acid chain; its full sequence is GTP-dependent dephospho-CoA kinase (172 aa).

The GTP site is built by Asp-40, Val-41, Val-42, Asp-59, and Glu-112.

It belongs to the GTP-dependent DPCK family.

It carries out the reaction 3'-dephospho-CoA + GTP = GDP + CoA + H(+). The protein operates within cofactor biosynthesis; coenzyme A biosynthesis. Catalyzes the GTP-dependent phosphorylation of the 3'-hydroxyl group of dephosphocoenzyme A to form coenzyme A (CoA). This Methanospirillum hungatei JF-1 (strain ATCC 27890 / DSM 864 / NBRC 100397 / JF-1) protein is GTP-dependent dephospho-CoA kinase.